The sequence spans 236 residues: 2-C-methyl-D-erythritol 4-phosphate cytidylyltransferase (236 aa).

It belongs to the IspD/TarI cytidylyltransferase family. IspD subfamily. In terms of assembly, homodimer.

It carries out the reaction 2-C-methyl-D-erythritol 4-phosphate + CTP + H(+) = 4-CDP-2-C-methyl-D-erythritol + diphosphate. Its pathway is isoprenoid biosynthesis; isopentenyl diphosphate biosynthesis via DXP pathway; isopentenyl diphosphate from 1-deoxy-D-xylulose 5-phosphate: step 2/6. Functionally, catalyzes the formation of 4-diphosphocytidyl-2-C-methyl-D-erythritol from CTP and 2-C-methyl-D-erythritol 4-phosphate (MEP). This chain is 2-C-methyl-D-erythritol 4-phosphate cytidylyltransferase, found in Salmonella paratyphi B (strain ATCC BAA-1250 / SPB7).